Here is a 429-residue protein sequence, read N- to C-terminus: uncharacterized protein (429 aa).

10 consecutive transmembrane segments (helical) span residues 26–46 (VALT…HDIF), 51–71 (TGID…VGVL), 99–119 (LVLV…VLLI), 135–155 (TSFL…TLVG), 173–193 (FMLH…AVLP), 223–243 (LLVK…AHPV), 278–298 (TLLF…TGVV), 311–331 (GNIV…SGII), 361–381 (WWAL…GASA), and 407–427 (VVTA…YFVL).

This sequence belongs to the CitM (TC 2.A.11) transporter family.

It is found in the cell membrane. This is an uncharacterized protein from Mycobacterium tuberculosis (strain ATCC 25618 / H37Rv).